The primary structure comprises 207 residues: Superoxide dismutase [Mn] (207 aa).

Mn(2+) is bound by residues His28, His76, Asp160, and His164.

This sequence belongs to the iron/manganese superoxide dismutase family. Mn(2+) is required as a cofactor.

It carries out the reaction 2 superoxide + 2 H(+) = H2O2 + O2. Its function is as follows. Destroys superoxide anion radicals which are normally produced within the cells and which are toxic to biological systems. This chain is Superoxide dismutase [Mn] (sodA), found in Nocardia asteroides.